A 367-amino-acid polypeptide reads, in one-letter code: B2 bradykinin receptor (367 aa).

Residues 1–36 (MLNITSQVLAPALNGSVSQSSGCPNTEWSGWLNVIQ) lie on the Extracellular side of the membrane. N-linked (GlcNAc...) asparagine glycosylation is found at N3 and N14. The helical transmembrane segment at 37–60 (APFLWVLFVLATLENLFVLSVFCL) threads the bilayer. Residues 61–69 (HKSSCTVAE) lie on the Cytoplasmic side of the membrane. A helical membrane pass occupies residues 70-94 (VYLGNLAAADLILACGLPFWAVTIA). Over 95–107 (NHFDWLFGEALCR) the chain is Extracellular. A disulfide bond links C106 and C187. Residues 108-129 (VVNTMIYMNLYSSICFLMLVSI) traverse the membrane as a helical segment. Over 130-151 (DRYLALVKTMSIGRMRRVRWAK) the chain is Cytoplasmic. Y132 is modified (phosphotyrosine). Residues 152 to 174 (LYSLVIWGCTLLLSSPMLVFRTM) traverse the membrane as a helical segment. Residues 175–197 (KDYRDEGYNVTACIIDYPSRSWE) are Extracellular-facing. The N-linked (GlcNAc...) asparagine glycan is linked to N183. Residues 198–224 (VFTNVLLNLVGFLLPLSVITFCTVQIL) form a helical membrane-spanning segment. Over 225–243 (QVLRNNEMQKFKEIQTERR) the chain is Cytoplasmic. A helical transmembrane segment spans residues 244 to 268 (ATVLVLAVLLLFVVCWLPFQVSTFL). Residues 269–287 (DTLLKLGVLSSCWDEHVID) lie on the Extracellular side of the membrane. A helical membrane pass occupies residues 288–311 (VITQVGSFMGYSNSCLNPLVYVIV). Topologically, residues 312–367 (GKRFRKKSREVYRAACPKAGCVLEPVQAESSMGTLRTSISVERQIHKLPEWTRSSQ) are cytoplasmic. Y323 bears the Phosphotyrosine mark. C327 is lipidated: S-palmitoyl cysteine. The residue at position 342 (S342) is a Phosphoserine. T345 is modified (phosphothreonine). A phosphoserine; by GRK6 mark is found at S349 and S351.

This sequence belongs to the G-protein coupled receptor 1 family. Bradykinin receptor subfamily. BDKRB2 sub-subfamily. In terms of assembly, forms a complex with PECAM1 and GNAQ. Interacts with PECAM1.

It is found in the cell membrane. Receptor for bradykinin. It is associated with G proteins that activate a phosphatidylinositol-calcium second messenger system. The protein is B2 bradykinin receptor (BDKRB2) of Oryctolagus cuniculus (Rabbit).